The chain runs to 107 residues: Nucleoid-associated protein A1C_06705 (107 aa).

This sequence belongs to the YbaB/EbfC family. Homodimer.

It is found in the cytoplasm. The protein localises to the nucleoid. Binds to DNA and alters its conformation. May be involved in regulation of gene expression, nucleoid organization and DNA protection. This chain is Nucleoid-associated protein A1C_06705, found in Rickettsia akari (strain Hartford).